Reading from the N-terminus, the 141-residue chain is Nuclear transcription factor Y subunit B-1 (141 aa).

The segment at 1-23 (MADTPSSPAGDGGESGGSVREQD) is disordered. Alanine 2 is modified (N-acetylalanine). Residues 26-32 (LPIANIS) mediate DNA binding. Residues 53 to 64 (VQECVSEFISFI) are subunit association domain (SAD). A disordered region spans residues 114–141 (DNKGSGKSGDGSNRDAGGGVSGEEMPSW).

Belongs to the NFYB/HAP3 subunit family. As to quaternary structure, heterotrimeric transcription factor composed of three components, NF-YA, NF-YB and NF-YC. NF-YB and NF-YC must interact and dimerize for NF-YA association and DNA binding. Binds directly with DPB3-1. In terms of tissue distribution, ubiquitous. Predominantly expressed in leaves, flowers and siliques.

The protein localises to the nucleus. In terms of biological role, component of the NF-Y/HAP transcription factor complex. The NF-Y complex stimulates the transcription of various genes by recognizing and binding to a CCAAT motif in promoters. The chain is Nuclear transcription factor Y subunit B-1 from Arabidopsis thaliana (Mouse-ear cress).